Consider the following 230-residue polypeptide: 5'-methylthioadenosine/S-adenosylhomocysteine nucleosidase (230 aa).

Catalysis depends on Glu-12, which acts as the Proton acceptor. Substrate is bound by residues Gly-78, Val-152, and 173 to 174; that span reads ME. Residue Asp-197 is the Proton donor of the active site.

It belongs to the PNP/UDP phosphorylase family. MtnN subfamily.

The catalysed reaction is S-adenosyl-L-homocysteine + H2O = S-(5-deoxy-D-ribos-5-yl)-L-homocysteine + adenine. The enzyme catalyses S-methyl-5'-thioadenosine + H2O = 5-(methylsulfanyl)-D-ribose + adenine. It catalyses the reaction 5'-deoxyadenosine + H2O = 5-deoxy-D-ribose + adenine. Its pathway is amino-acid biosynthesis; L-methionine biosynthesis via salvage pathway; S-methyl-5-thio-alpha-D-ribose 1-phosphate from S-methyl-5'-thioadenosine (hydrolase route): step 1/2. Functionally, catalyzes the irreversible cleavage of the glycosidic bond in both 5'-methylthioadenosine (MTA) and S-adenosylhomocysteine (SAH/AdoHcy) to adenine and the corresponding thioribose, 5'-methylthioribose and S-ribosylhomocysteine, respectively. Also cleaves 5'-deoxyadenosine, a toxic by-product of radical S-adenosylmethionine (SAM) enzymes, into 5-deoxyribose and adenine. This chain is 5'-methylthioadenosine/S-adenosylhomocysteine nucleosidase, found in Glaesserella parasuis serovar 5 (strain SH0165) (Haemophilus parasuis).